The sequence spans 85 residues: UPF0297 protein Cbei_1105 (85 aa).

This sequence belongs to the UPF0297 family.

The sequence is that of UPF0297 protein Cbei_1105 from Clostridium beijerinckii (strain ATCC 51743 / NCIMB 8052) (Clostridium acetobutylicum).